A 132-amino-acid chain; its full sequence is Small ribosomal subunit protein uS8 (132 aa).

The protein belongs to the universal ribosomal protein uS8 family. As to quaternary structure, part of the 30S ribosomal subunit. Contacts proteins S5 and S12.

In terms of biological role, one of the primary rRNA binding proteins, it binds directly to 16S rRNA central domain where it helps coordinate assembly of the platform of the 30S subunit. The polypeptide is Small ribosomal subunit protein uS8 (Lactococcus lactis subsp. lactis (strain IL1403) (Streptococcus lactis)).